Here is a 522-residue protein sequence, read N- to C-terminus: BTB/POZ domain-containing protein 3 (522 aa).

Positions 25 to 44 (RSKKSSKKANTSSSSSNSSK) are disordered. Residues 32 to 44 (KANTSSSSSNSSK) show a composition bias toward low complexity. The 71-residue stretch at 120–190 (ADVHFVVGPP…IYCDEIDLAA (71 aa)) folds into the BTB domain. The 66-residue stretch at 235–300 (FEEPDLTQRC…NWAEVECQRQ (66 aa)) folds into the BACK domain.

The protein resides in the cytoplasm. It is found in the cytosol. The protein localises to the nucleus. In terms of biological role, acts as a key regulator of dendritic field orientation during development of sensory cortex. Also directs dendrites toward active axon terminals when ectopically expressed. This is BTB/POZ domain-containing protein 3 (BTBD3) from Homo sapiens (Human).